Reading from the N-terminus, the 294-residue chain is Nucleotide-binding protein DICTH_1001 (294 aa).

Residue 10–17 coordinates ATP; sequence GLSGAGKS. Residue 61 to 64 participates in GTP binding; sequence DIRT.

The protein belongs to the RapZ-like family.

Functionally, displays ATPase and GTPase activities. This chain is Nucleotide-binding protein DICTH_1001, found in Dictyoglomus thermophilum (strain ATCC 35947 / DSM 3960 / H-6-12).